The following is a 491-amino-acid chain: Galactose-1-phosphate uridylyltransferase 1 (491 aa).

The protein belongs to the galactose-1-phosphate uridylyltransferase type 2 family.

The protein localises to the cytoplasm. It catalyses the reaction alpha-D-galactose 1-phosphate + UDP-alpha-D-glucose = alpha-D-glucose 1-phosphate + UDP-alpha-D-galactose. The protein operates within carbohydrate metabolism; galactose metabolism. This is Galactose-1-phosphate uridylyltransferase 1 (galT1) from Streptococcus pneumoniae serotype 4 (strain ATCC BAA-334 / TIGR4).